The primary structure comprises 103 residues: UPF0473 protein LBA0420 (103 aa).

Belongs to the UPF0473 family.

This Lactobacillus acidophilus (strain ATCC 700396 / NCK56 / N2 / NCFM) protein is UPF0473 protein LBA0420.